Reading from the N-terminus, the 61-residue chain is Large ribosomal subunit protein uL30 (61 aa).

This sequence belongs to the universal ribosomal protein uL30 family. As to quaternary structure, part of the 50S ribosomal subunit.

This Exiguobacterium sibiricum (strain DSM 17290 / CCUG 55495 / CIP 109462 / JCM 13490 / 255-15) protein is Large ribosomal subunit protein uL30.